The following is a 766-amino-acid chain: Darlin (766 aa).

ARM repeat units lie at residues 82–119 (QLFEFLLPNGVETLNTDTTVEQSELFSMVCRLLGNLTY), 167–208 (DFIQ…NLVD), 423–464 (EPNC…NLTL), and 465–537 (PTIN…ASMD). Residues 561 to 585 (EEKEKTIEKTDEKTDEKTNEKKQSK) are disordered. An ARM 5 repeat occupies 610–649 (HQEKMKQLIEESVEPFFSLLQSPFPILQVEGAKGLVLLIK).

The protein belongs to the RAP1GDS1 family. In terms of assembly, binds to small GTPases racE, racC but not rab21. Binds preferentially to GDP-bound racE.

Part of a signaling pathway that initiates the aggregation and leads to the formation of aggregation centers or streams. Not essential for cytokinesis, pinocytosis or phagocytosis. Not essential for development, except in starvation-induced aggregation. This is Darlin (darA) from Dictyostelium discoideum (Social amoeba).